A 109-amino-acid polypeptide reads, in one-letter code: Probable WRKY transcription factor 43 (109 aa).

Positions 24–89 (SDADILDDGY…YEGIHNHPCE (66 aa)) form a DNA-binding region, WRKY.

Belongs to the WRKY group II-c family.

It is found in the nucleus. Functionally, transcription factor. Interacts specifically with the W box (5'-(T)TGAC[CT]-3'), a frequently occurring elicitor-responsive cis-acting element. In Arabidopsis thaliana (Mouse-ear cress), this protein is Probable WRKY transcription factor 43 (WRKY43).